The following is a 436-amino-acid chain: Trigger factor (436 aa).

In terms of domain architecture, PPIase FKBP-type spans 163–248; that stretch reads GDRVVLDFAG…VKEVAEGVLP (86 aa).

Belongs to the FKBP-type PPIase family. Tig subfamily.

Its subcellular location is the cytoplasm. The catalysed reaction is [protein]-peptidylproline (omega=180) = [protein]-peptidylproline (omega=0). Functionally, involved in protein export. Acts as a chaperone by maintaining the newly synthesized protein in an open conformation. Functions as a peptidyl-prolyl cis-trans isomerase. The sequence is that of Trigger factor from Bordetella pertussis (strain Tohama I / ATCC BAA-589 / NCTC 13251).